We begin with the raw amino-acid sequence, 102 residues long: RNA-binding protein Hfq (102 aa).

Positions 9–68 (DPFLNALRRERVPVSIYLVNGIKLQGQIESFDQFVILLKNTVSQMVYKHAISTVVPSRPV) constitute a Sm domain. A disordered region spans residues 63 to 102 (VPSRPVSHHSNNAGGGASNNYHHGSNVQGSTAQQDSEETE). Over residues 70–88 (HHSNNAGGGASNNYHHGSN) the composition is skewed to low complexity.

Belongs to the Hfq family. In terms of assembly, homohexamer.

In terms of biological role, RNA chaperone that binds small regulatory RNA (sRNAs) and mRNAs to facilitate mRNA translational regulation in response to envelope stress, environmental stress and changes in metabolite concentrations. Also binds with high specificity to tRNAs. This chain is RNA-binding protein Hfq, found in Salmonella choleraesuis (strain SC-B67).